The sequence spans 279 residues: Thymidylate synthase (279 aa).

Position 141-142 (141-142) interacts with dUMP; that stretch reads RR. The active-site Nucleophile is Cys161. DUMP contacts are provided by residues 181–184, Asn192, and 222–224; these read RSND and HVY. Asp184 serves as a coordination point for (6R)-5,10-methylene-5,6,7,8-tetrahydrofolate. Residue Ala278 participates in (6R)-5,10-methylene-5,6,7,8-tetrahydrofolate binding.

This sequence belongs to the thymidylate synthase family. Bacterial-type ThyA subfamily. In terms of assembly, homodimer.

It is found in the cytoplasm. The enzyme catalyses dUMP + (6R)-5,10-methylene-5,6,7,8-tetrahydrofolate = 7,8-dihydrofolate + dTMP. The protein operates within pyrimidine metabolism; dTTP biosynthesis. Functionally, catalyzes the reductive methylation of 2'-deoxyuridine-5'-monophosphate (dUMP) to 2'-deoxythymidine-5'-monophosphate (dTMP) while utilizing 5,10-methylenetetrahydrofolate (mTHF) as the methyl donor and reductant in the reaction, yielding dihydrofolate (DHF) as a by-product. This enzymatic reaction provides an intracellular de novo source of dTMP, an essential precursor for DNA biosynthesis. The chain is Thymidylate synthase from Bacillus subtilis subsp. natto.